Reading from the N-terminus, the 569-residue chain is Peroxisomal targeting signal receptor (569 aa).

Cys-9 is covalently cross-linked (Glycyl cysteine thioester (Cys-Gly) (interchain with G-Cter in ubiquitin)). An amphipathic helix 1 (AH1) region spans residues Ala-10–Ser-32. A Glycyl lysine isopeptide (Lys-Gly) (interchain with G-Cter in ubiquitin) cross-link involves residue Lys-21. The interval Ser-23–Gln-42 is disordered. The tract at residues Arg-57 to Phe-72 is amphipathic helix 2 (AH2). 2 consecutive short sequence motifs (wxxxF/Y motif) follow at residues Trp-118–Phe-122 and Trp-183–Phe-187. The segment at Phe-218–Leu-234 is amphipathic helix 4 (AH4). The WxxxF/Y motif 3 motif lies at Trp-243–Phe-247. 7 TPR repeats span residues Leu-272–His-305, Val-306–Asn-339, Leu-340–Arg-377, Ala-378–Asp-415, Ser-416–Asp-449, Ala-450–Phe-483, and Val-484–Glu-517.

This sequence belongs to the peroxisomal targeting signal receptor family. As to quaternary structure, interacts (via WxxxF/Y and LVxEF motifs) with PEX14; promoting translocation through the PEX13-PEX14 docking complex. In terms of processing, monoubiquitinated at Cys-9 by PEX2 during PEX5 passage through the retrotranslocation channel: monoubiquitination acts as a signal for PEX5 extraction and is required for proper export from peroxisomes and recycling. When PEX5 recycling is compromised, polyubiquitinated at Lys-21 by PEX10 during its passage through the retrotranslocation channel, leading to its degradation.

It localises to the cytoplasm. The protein localises to the cytosol. It is found in the peroxisome matrix. In terms of biological role, receptor that mediates peroxisomal import of proteins containing a C-terminal PTS1-type tripeptide peroxisomal targeting signal (SKL-type). Binds to cargo proteins containing a PTS1 peroxisomal targeting signal in the cytosol, and translocates them into the peroxisome matrix by passing through the PEX13-PEX14 docking complex along with cargo proteins. PEX5 receptor is then retrotranslocated into the cytosol, leading to release of bound cargo in the peroxisome matrix, and reset for a subsequent peroxisome import cycle. This chain is Peroxisomal targeting signal receptor (PEX5), found in Pichia angusta (Yeast).